The primary structure comprises 421 residues: MTDTLNPLVAAQEKVRIACEKLGCDPAVYELLKEPQRVIEISIPVKMDDGTVKVFKGWRSAHSSAVGPSKGGVRFHPNVNMDEVKALSLWMTFKGGALGLPYGGGKGGICVDPAELSERELEQLSRGWVRGLYKYLGDRIDIPAPDVNTNGQIMSWFVDEYVKLNGERMDIGTFTGKPVAFGGSEGRNEATGFGVAVVVRESAKRFGIKMEDAKIAVQGFGNVGTFTVKNIERQGGKVCAIAEWDRNEGNYALYNENGIDFKELLAYKEANKTLIGFPGAERITDEEFWTKEYDIIVPAALENVITGERAKTINAKLVCEAANGPTTPEGDKVLTERGINLTPDILTNSGGVLVSYYEWVQNQYGYYWTEAEVEEKQEADMMKAIKGVFAVADEYNVTLREAVYMYAIKSIDVAMKLRGWY.

Substrate is bound by residues lysine 70 and lysine 94. Lysine 106 (proton donor) is an active-site residue. NAD(+)-binding residues include threonine 191 and asparagine 222. Serine 355 is a binding site for substrate.

The protein belongs to the Glu/Leu/Phe/Val dehydrogenases family. In terms of assembly, homohexamer.

It carries out the reaction L-glutamate + NAD(+) + H2O = 2-oxoglutarate + NH4(+) + NADH + H(+). It functions in the pathway amino-acid degradation; L-glutamate degradation via hydroxyglutarate pathway; crotonoyl-CoA from L-glutamate: step 1/5. The protein is NAD-specific glutamate dehydrogenase of Peptoniphilus asaccharolyticus (Peptostreptococcus asaccharolyticus).